A 215-amino-acid polypeptide reads, in one-letter code: Redox-sensing transcriptional repressor Rex (215 aa).

A DNA-binding region (H-T-H motif) is located at residues 18–57; it reads LYYRFLKNLHASGKQRVSSAELSEAVKVDPATIRRDFSYF. 92 to 97 provides a ligand contact to NAD(+); the sequence is GVGNLG.

The protein belongs to the transcriptional regulatory Rex family. As to quaternary structure, homodimer.

It localises to the cytoplasm. Its function is as follows. Modulates transcription in response to changes in cellular NADH/NAD(+) redox state. This Geobacillus sp. (strain WCH70) protein is Redox-sensing transcriptional repressor Rex.